Reading from the N-terminus, the 71-residue chain is Small ribosomal subunit protein bS21 (71 aa).

This sequence belongs to the bacterial ribosomal protein bS21 family.

The sequence is that of Small ribosomal subunit protein bS21 from Photobacterium profundum (strain SS9).